The primary structure comprises 498 residues: Hexokinase-1 (498 aa).

A Hexokinase domain is found at 39–492 (AAAQRVVAEL…SGLGAALVAA (454 aa)). Residues 95-233 (TGGEEGSYYA…GLDMRVSALI (139 aa)) are hexokinase small subdomain. Glycine 109, threonine 110, and asparagine 111 together coordinate ADP. D-glucose is bound by residues threonine 199, lysine 200, asparagine 234, and aspartate 235. Residues 234–481 (NDTVGTLAAG…ERVVVKLASD (248 aa)) form a hexokinase large subdomain region. Threonine 258 contacts ADP. Residues asparagine 261, glutamate 290, and glutamate 321 each coordinate D-glucose. An ADP-binding site is contributed by glycine 446.

This sequence belongs to the hexokinase family. In terms of tissue distribution, highly expressed in senescent leaves.

It catalyses the reaction a D-hexose + ATP = a D-hexose 6-phosphate + ADP + H(+). The catalysed reaction is D-fructose + ATP = D-fructose 6-phosphate + ADP + H(+). The enzyme catalyses D-glucose + ATP = D-glucose 6-phosphate + ADP + H(+). It functions in the pathway carbohydrate metabolism; hexose metabolism. It participates in carbohydrate degradation; glycolysis; D-glyceraldehyde 3-phosphate and glycerone phosphate from D-glucose: step 1/4. Fructose and glucose phosphorylating enzyme. Acts as a positive regulator of leaf senescence by mediating glucose accumulation and inducing an increase in reactive oxygen species (ROS). The protein is Hexokinase-1 (HXK1) of Oryza sativa subsp. japonica (Rice).